A 261-amino-acid polypeptide reads, in one-letter code: Carnitinyl-CoA dehydratase (261 aa).

The active-site Nucleophile is Glu-111. The Proton acceptor role is filled by Glu-131.

It belongs to the enoyl-CoA hydratase/isomerase family.

It catalyses the reaction (R)-carnitinyl-CoA = crotonobetainyl-CoA + H2O. Its pathway is amine and polyamine metabolism; carnitine metabolism. Its function is as follows. Catalyzes the reversible dehydration of L-carnitinyl-CoA to crotonobetainyl-CoA. This is Carnitinyl-CoA dehydratase from Salmonella enteritidis PT4 (strain P125109).